The primary structure comprises 619 residues: Xyloglucan galactosyltransferase MUR3 (619 aa).

A disordered region spans residues 1 to 26 (MFPRVSMRRRSAEVSPTEPMEKGNGK). Topologically, residues 1–33 (MFPRVSMRRRSAEVSPTEPMEKGNGKNQTNRIC) are cytoplasmic. A helical; Signal-anchor for type II membrane protein membrane pass occupies residues 34–54 (LLVALSLFFWALLLYFHFVVL). Over 55 to 619 (GTSNIDKQLQ…WKSEQRDKTQ (565 aa)) the chain is Lumenal. 7 N-linked (GlcNAc...) asparagine glycosylation sites follow: asparagine 116, asparagine 146, asparagine 231, asparagine 257, asparagine 319, asparagine 465, and asparagine 482. The tract at residues 576-619 (HVWDPFFSKPKPGEDGSSDGNGGTTISADAAKNSWKSEQRDKTQ) is disordered. The segment covering 610-619 (WKSEQRDKTQ) has biased composition (basic and acidic residues).

The protein belongs to the glycosyltransferase 47 family. As to quaternary structure, interacts with CSLC4 and FUT1. In terms of tissue distribution, ubiquitous.

The protein resides in the golgi apparatus. It is found in the golgi stack membrane. Its subcellular location is the golgi apparatus membrane. Functionally, involved in the attachment of the Gal residue on the third xylosyl unit within the XXXG core structure of xyloglucan, the principal glycan that interlaces the cellulose microfibrils in plant cell wall. Associates with other xyloglucan-synthesizing enzymes to form multiprotein complexes for xyloglucan synthesis in the Golgi. Interacts with actin and is required for the proper endomembrane organization and for the cell elongation. Not involved in the trafficking from the endoplasmic reticulum to the vacuoles. Involved in salt stress tolerance. Participates in the control of the expression of genes encoding for proteins involved in reactive oxygen species (ROS) detoxification under salt stress. May contribute to the maintenance of the proper organization of actin microfilaments during salt stress-induced ROS production. This chain is Xyloglucan galactosyltransferase MUR3, found in Arabidopsis thaliana (Mouse-ear cress).